The following is a 378-amino-acid chain: Probable pectin lyase C (378 aa).

An N-terminal signal peptide occupies residues 1 to 18; it reads MKVPFLQLLCLNAALASA. 2 cysteine pairs are disulfide-bonded: Cys-81–Cys-100 and Cys-90–Cys-220. Asn-123 carries an N-linked (GlcNAc...) asparagine glycan. The active site involves Arg-250. Cys-316 and Cys-324 are oxidised to a cystine.

The protein belongs to the polysaccharide lyase 1 family.

It is found in the secreted. The enzyme catalyses Eliminative cleavage of (1-&gt;4)-alpha-D-galacturonan methyl ester to give oligosaccharides with 4-deoxy-6-O-methyl-alpha-D-galact-4-enuronosyl groups at their non-reducing ends.. Pectinolytic enzymes consist of four classes of enzymes: pectin lyase, polygalacturonase, pectin methylesterase and rhamnogalacturonase. Among pectinolytic enzymes, pectin lyase is the most important in depolymerization of pectin, since it cleaves internal glycosidic bonds of highly methylated pectins. This is Probable pectin lyase C (pelC) from Aspergillus niger.